The sequence spans 407 residues: Tyrosine--tRNA ligase 1 (407 aa).

Tyr35 lines the L-tyrosine pocket. Residues 40-49 carry the 'HIGH' region motif; that stretch reads PTGDSLHVGH. Tyr168 and Gln172 together coordinate L-tyrosine. The short motif at 228–232 is the 'KMSKS' region element; that stretch reads KMGKT. Residue Lys231 coordinates ATP. The S4 RNA-binding domain occupies 340–406; it reads SSILDVLVHT…GKKKYYKIVI (67 aa).

This sequence belongs to the class-I aminoacyl-tRNA synthetase family. TyrS type 1 subfamily. As to quaternary structure, homodimer.

The protein localises to the cytoplasm. It catalyses the reaction tRNA(Tyr) + L-tyrosine + ATP = L-tyrosyl-tRNA(Tyr) + AMP + diphosphate + H(+). Functionally, catalyzes the attachment of tyrosine to tRNA(Tyr) in a two-step reaction: tyrosine is first activated by ATP to form Tyr-AMP and then transferred to the acceptor end of tRNA(Tyr). The protein is Tyrosine--tRNA ligase 1 of Clostridium acetobutylicum (strain ATCC 824 / DSM 792 / JCM 1419 / IAM 19013 / LMG 5710 / NBRC 13948 / NRRL B-527 / VKM B-1787 / 2291 / W).